A 145-amino-acid polypeptide reads, in one-letter code: D-aminoacyl-tRNA deacylase (145 aa).

Positions 137 to 138 (GP) match the Gly-cisPro motif, important for rejection of L-amino acids motif.

It belongs to the DTD family. In terms of assembly, homodimer.

It is found in the cytoplasm. The catalysed reaction is glycyl-tRNA(Ala) + H2O = tRNA(Ala) + glycine + H(+). It catalyses the reaction a D-aminoacyl-tRNA + H2O = a tRNA + a D-alpha-amino acid + H(+). Functionally, an aminoacyl-tRNA editing enzyme that deacylates mischarged D-aminoacyl-tRNAs. Also deacylates mischarged glycyl-tRNA(Ala), protecting cells against glycine mischarging by AlaRS. Acts via tRNA-based rather than protein-based catalysis; rejects L-amino acids rather than detecting D-amino acids in the active site. By recycling D-aminoacyl-tRNA to D-amino acids and free tRNA molecules, this enzyme counteracts the toxicity associated with the formation of D-aminoacyl-tRNA entities in vivo and helps enforce protein L-homochirality. The sequence is that of D-aminoacyl-tRNA deacylase from Shewanella oneidensis (strain ATCC 700550 / JCM 31522 / CIP 106686 / LMG 19005 / NCIMB 14063 / MR-1).